The primary structure comprises 280 residues: Large ribosomal subunit protein uL2 (280 aa).

2 disordered regions span residues 1 to 58 and 226 to 280; these read MAIR…GGGH and MNPV…KHGR. Basic residues-rich tracts occupy residues 37–58 and 268–280; these read LHGH…GGGH and IVRR…KHGR.

This sequence belongs to the universal ribosomal protein uL2 family. In terms of assembly, part of the 50S ribosomal subunit. Forms a bridge to the 30S subunit in the 70S ribosome.

One of the primary rRNA binding proteins. Required for association of the 30S and 50S subunits to form the 70S ribosome, for tRNA binding and peptide bond formation. It has been suggested to have peptidyltransferase activity; this is somewhat controversial. Makes several contacts with the 16S rRNA in the 70S ribosome. The sequence is that of Large ribosomal subunit protein uL2 from Mycolicibacterium paratuberculosis (strain ATCC BAA-968 / K-10) (Mycobacterium paratuberculosis).